A 209-amino-acid polypeptide reads, in one-letter code: Large ribosomal subunit protein uL3 (209 aa).

Glutamine 150 bears the N5-methylglutamine mark.

The protein belongs to the universal ribosomal protein uL3 family. In terms of assembly, part of the 50S ribosomal subunit. Forms a cluster with proteins L14 and L19. Post-translationally, methylated by PrmB.

Functionally, one of the primary rRNA binding proteins, it binds directly near the 3'-end of the 23S rRNA, where it nucleates assembly of the 50S subunit. The sequence is that of Large ribosomal subunit protein uL3 from Klebsiella pneumoniae (strain 342).